The following is a 164-amino-acid chain: Telomerase-associated protein of 19 kDa (164 aa).

In terms of assembly, component of the telomerase holoenzyme complex, composed of the catalytic core (the catalytic subunit TERT, the telomerase RNA template component TER and TAP65/p65), which is associated with two heterotrimeric subcomplexes: (i) the replication protein A (RPA)-related subcomplex, composed of TEB1, RPA2/TEB2 and RPA3/TEB3 and (ii) the CST-like subcomplex, composed of TAP75/p75, TAP45/p45 and TAP19/p19. TEB1 and the CST-like subcomplex are tethered to the catalytic core by TAP50/p50.

The protein resides in the chromosome. It localises to the telomere. Functionally, component of a CST-like subcomplex of the holoenzyme telomerase ribonucleoprotein complex, which stimulates telomerase complementary-strand synthesis. Telomerase is an essential ribonucleoprotein enzyme that copies new telomeric repeats onto chromosome ends by repetitively synthesizing the short telomere-repeat sequence 5'-TTGGGG-3' using an RNA template component TER. The CST-like subcomplex (also named 7-4-1) binds telomeric single-stranded DNA and coordinates telomere G-strand and C-strand synthesis. This is Telomerase-associated protein of 19 kDa from Tetrahymena thermophila (strain SB210).